A 158-amino-acid polypeptide reads, in one-letter code: NAD(P)H-quinone oxidoreductase subunit J, chloroplastic (158 aa).

The protein belongs to the complex I 30 kDa subunit family. As to quaternary structure, NDH is composed of at least 16 different subunits, 5 of which are encoded in the nucleus.

It localises to the plastid. The protein localises to the chloroplast thylakoid membrane. The catalysed reaction is a plastoquinone + NADH + (n+1) H(+)(in) = a plastoquinol + NAD(+) + n H(+)(out). The enzyme catalyses a plastoquinone + NADPH + (n+1) H(+)(in) = a plastoquinol + NADP(+) + n H(+)(out). Functionally, NDH shuttles electrons from NAD(P)H:plastoquinone, via FMN and iron-sulfur (Fe-S) centers, to quinones in the photosynthetic chain and possibly in a chloroplast respiratory chain. The immediate electron acceptor for the enzyme in this species is believed to be plastoquinone. Couples the redox reaction to proton translocation, and thus conserves the redox energy in a proton gradient. In Olimarabidopsis pumila (Dwarf rocket), this protein is NAD(P)H-quinone oxidoreductase subunit J, chloroplastic.